A 229-amino-acid polypeptide reads, in one-letter code: 3-isopropylmalate dehydratase small subunit (229 aa).

Positions L198–I229 are disordered. Positions V200–E215 are enriched in basic and acidic residues.

It belongs to the LeuD family. LeuD type 1 subfamily. Heterodimer of LeuC and LeuD.

The catalysed reaction is (2R,3S)-3-isopropylmalate = (2S)-2-isopropylmalate. It functions in the pathway amino-acid biosynthesis; L-leucine biosynthesis; L-leucine from 3-methyl-2-oxobutanoate: step 2/4. Catalyzes the isomerization between 2-isopropylmalate and 3-isopropylmalate, via the formation of 2-isopropylmaleate. The chain is 3-isopropylmalate dehydratase small subunit from Bifidobacterium adolescentis (strain ATCC 15703 / DSM 20083 / NCTC 11814 / E194a).